Reading from the N-terminus, the 235-residue chain is RNA pyrophosphohydrolase (235 aa).

One can recognise a Nudix hydrolase domain in the interval 6–149; it reads GFRPNVGIIL…KRGVYEMALT (144 aa). The short motif at 38 to 59 is the Nudix box element; sequence GGIDRGENPEQAMFRELHEEVG. The segment at 184–235 is disordered; that stretch reads ANQSGEPGSFPAAGGIPSYATRPGAPFELPPGATFEPDPQTSFGVNAPTKKT.

This sequence belongs to the Nudix hydrolase family. RppH subfamily. Requires a divalent metal cation as cofactor.

Functionally, accelerates the degradation of transcripts by removing pyrophosphate from the 5'-end of triphosphorylated RNA, leading to a more labile monophosphorylated state that can stimulate subsequent ribonuclease cleavage. This is RNA pyrophosphohydrolase from Polaromonas naphthalenivorans (strain CJ2).